The following is a 692-amino-acid chain: Elongation factor G (692 aa).

A tr-type G domain is found at 8–282; that stretch reads ENTRNIGIMA…AVIDYLPSPL (275 aa). Residues 17–24, 81–85, and 135–138 each bind GTP; these read AHIDAGKT, DTPGH, and NKMD.

This sequence belongs to the TRAFAC class translation factor GTPase superfamily. Classic translation factor GTPase family. EF-G/EF-2 subfamily.

It is found in the cytoplasm. Functionally, catalyzes the GTP-dependent ribosomal translocation step during translation elongation. During this step, the ribosome changes from the pre-translocational (PRE) to the post-translocational (POST) state as the newly formed A-site-bound peptidyl-tRNA and P-site-bound deacylated tRNA move to the P and E sites, respectively. Catalyzes the coordinated movement of the two tRNA molecules, the mRNA and conformational changes in the ribosome. This chain is Elongation factor G, found in Bacillus cereus (strain AH820).